The following is a 248-amino-acid chain: Calpain small subunit 2 (248 aa).

Ca(2+) is bound by residues Ala89, Asp92, Glu94, Asp117, Asp132, Asp134, Thr136, Lys138, Glu143, Asp162, Asp164, Ser166, and Asp205. EF-hand domains lie at 119–152, 149–184, 185–213, and 214–248; these read FSLDTCRSIVSVMDSDTTGKLGFEEFKYLWNNIK, NNIKKWQCVYKQYDRDHSGSLGSSQLRGALQAAGFQ, LNEQLYQMIVRRYANEDGDMDFNNFISCL, and VRLDAMFRAFKSLDRDRDGLIQVSIKEWLQLTMYS.

Heterodimer of a large (catalytic) and a small (regulatory) subunit.

The protein localises to the cytoplasm. The protein resides in the cell membrane. Functionally, calcium-regulated non-lysosomal thiol-protease which catalyzes limited proteolysis of substrates involved in cytoskeletal remodeling and signal transduction. This small subunit may act as a tissue-specific chaperone of the large subunit, possibly by helping it fold into its correct conformation for activity. The sequence is that of Calpain small subunit 2 (CAPNS2) from Homo sapiens (Human).